A 188-amino-acid polypeptide reads, in one-letter code: Peptidyl-tRNA hydrolase (188 aa).

A tRNA-binding site is contributed by Tyr-15. The active-site Proton acceptor is His-20. Residues Phe-66, Asn-68, and Asn-114 each coordinate tRNA.

Belongs to the PTH family. In terms of assembly, monomer.

Its subcellular location is the cytoplasm. It carries out the reaction an N-acyl-L-alpha-aminoacyl-tRNA + H2O = an N-acyl-L-amino acid + a tRNA + H(+). Functionally, hydrolyzes ribosome-free peptidyl-tRNAs (with 1 or more amino acids incorporated), which drop off the ribosome during protein synthesis, or as a result of ribosome stalling. Its function is as follows. Catalyzes the release of premature peptidyl moieties from peptidyl-tRNA molecules trapped in stalled 50S ribosomal subunits, and thus maintains levels of free tRNAs and 50S ribosomes. The sequence is that of Peptidyl-tRNA hydrolase from Lactococcus lactis subsp. lactis (strain IL1403) (Streptococcus lactis).